Here is a 297-residue protein sequence, read N- to C-terminus: Protein muscleblind (297 aa).

2 consecutive C3H1-type zinc fingers follow at residues 18-46 (WLQL…HPPA) and 52-80 (NGKV…HPPQ).

Belongs to the muscleblind family. In terms of tissue distribution, expressed in embryonic muscle cells.

It localises to the nucleus. Functionally, required for terminal differentiation of photoreceptor cells. Vital for embryonic development. The sequence is that of Protein muscleblind (mbl) from Drosophila melanogaster (Fruit fly).